The primary structure comprises 95 residues: Aspartyl/glutamyl-tRNA(Asn/Gln) amidotransferase subunit C (95 aa).

Belongs to the GatC family. Heterotrimer of A, B and C subunits.

It catalyses the reaction L-glutamyl-tRNA(Gln) + L-glutamine + ATP + H2O = L-glutaminyl-tRNA(Gln) + L-glutamate + ADP + phosphate + H(+). It carries out the reaction L-aspartyl-tRNA(Asn) + L-glutamine + ATP + H2O = L-asparaginyl-tRNA(Asn) + L-glutamate + ADP + phosphate + 2 H(+). In terms of biological role, allows the formation of correctly charged Asn-tRNA(Asn) or Gln-tRNA(Gln) through the transamidation of misacylated Asp-tRNA(Asn) or Glu-tRNA(Gln) in organisms which lack either or both of asparaginyl-tRNA or glutaminyl-tRNA synthetases. The reaction takes place in the presence of glutamine and ATP through an activated phospho-Asp-tRNA(Asn) or phospho-Glu-tRNA(Gln). This chain is Aspartyl/glutamyl-tRNA(Asn/Gln) amidotransferase subunit C, found in Pseudomonas putida (strain ATCC 700007 / DSM 6899 / JCM 31910 / BCRC 17059 / LMG 24140 / F1).